A 432-amino-acid polypeptide reads, in one-letter code: Protein ABHD8 (432 aa).

Disordered stretches follow at residues 47 to 69 (KHAGPAPAPTPPPPLSDAAQGDQ) and 121 to 149 (PAGSDGRSVPGSAGSGSGGRRRRARRPKR). Residues 52-61 (APAPTPPPPL) show a composition bias toward pro residues. Residues 139–149 (GRRRRARRPKR) are compositionally biased toward basic residues. Residues 170 to 272 (VLFFIHGVGG…HKVIMINGGG (103 aa)) enclose the AB hydrolase-1 domain. Residues S245, D363, and H391 each act as charge relay system in the active site.

Belongs to the AB hydrolase superfamily. In terms of assembly, interacts with NLRP3 (via NACHT and LLR domains); this interaction is enhanced in the presence of NLRP3 inflammasome inducers, such as ATP, nigericin, silica, or alum. Interacts with ZDHHC12.

It localises to the cytoplasm. Its function is as follows. Negatively regulates NLRP3-driven inflammation. Promotes NLRP3 degradation through the chaperone-mediated autophagy (CMA) pathway, hence attenuating inflammasome activation and IL1B secretion. Acts by recruiting palmitoyltransferase ZDHHC12 to NLRP3, facilitating NLRP3 palmitoylation and subsequent degradation. In Bos taurus (Bovine), this protein is Protein ABHD8.